The sequence spans 680 residues: Probable oxidoreductase YoaE (680 aa).

The 58-residue stretch at 9–66 (NGIFKSVCSLDCPDQCGLLIHKKDGKIVKVQGDPDHPVTAGNICNKVRNMTERIYDEK) folds into the 4Fe-4S Mo/W bis-MGD-type domain. [4Fe-4S] cluster-binding residues include Cys-16, Cys-20, Cys-24, and Cys-52.

The protein belongs to the prokaryotic molybdopterin-containing oxidoreductase family. Requires Mo-bis(molybdopterin guanine dinucleotide) as cofactor.

In Bacillus subtilis (strain 168), this protein is Probable oxidoreductase YoaE (yoaE).